A 349-amino-acid polypeptide reads, in one-letter code: Inositol 2-dehydrogenase (349 aa).

Belongs to the Gfo/Idh/MocA family. Homotetramer.

It catalyses the reaction myo-inositol + NAD(+) = scyllo-inosose + NADH + H(+). Its function is as follows. Involved in the oxidation of myo-inositol (MI) to 2-keto-myo-inositol (2KMI or 2-inosose). This is Inositol 2-dehydrogenase from Mycolicibacterium gilvum (strain PYR-GCK) (Mycobacterium gilvum (strain PYR-GCK)).